The following is a 1082-amino-acid chain: RhoGEF domain-containing protein gxcI (1082 aa).

The span at 1-15 (MRKNSTSNPSPSHQF) shows a compositional bias: polar residues. 5 disordered regions span residues 1–29 (MRKN…VNNN), 59–78 (DKNQ…VLPQ), 91–394 (YNEQ…VTSL), 438–488 (KQAS…SVSN), and 504–524 (INSF…SLSL). Low complexity-rich tracts occupy residues 20–29 (KNTTTVVNNN), 62–71 (QQQQQQQQQQ), 96–109 (PSSS…SSSP), 116–160 (LLST…SGSP), and 170–184 (PTIL…RQLP). Positions 185–206 (TRPPSPLPKLPSRPTSPVPPNP) are enriched in pro residues. The segment covering 211–244 (NTTTTNNNNNNNNNNNNNNNNNNNNNNNNNNNNN) has biased composition (low complexity). Residues 262-276 (PIPPPNDKPAPPPRP) are compositionally biased toward pro residues. A compositionally biased stretch (low complexity) spans 282–366 (TLTTPPTIAT…NNNNNSNNNK (85 aa)). The span at 367 to 379 (PLPPTSTKPPRPK) shows a compositional bias: pro residues. Residues 450 to 473 (SSLSLSTTPTSVSPSTPSSANPTP) are compositionally biased toward low complexity. The region spanning 622–817 (SFNKVIKEII…EKIVNDINGK (196 aa)) is the DH domain. Residues 838-994 (QQLRDQTFLK…NDIDEAINIL (157 aa)) are PH-like. Disordered stretches follow at residues 920–961 (NNNN…NSTP) and 1017–1060 (NNNN…NSNN).

Its function is as follows. GTPase-activating protein. The chain is RhoGEF domain-containing protein gxcI (gxcI) from Dictyostelium discoideum (Social amoeba).